Consider the following 353-residue polypeptide: Serine proteinase inhibitor 1 (353 aa).

This sequence belongs to the serpin family. Poxviruses subfamily.

It localises to the host cytoplasm. Functionally, plays a role in mediating viral host range. May act to inhibit a caspase independent form of apoptosis to allow efficient virus replication in infected cells. The sequence is that of Serine proteinase inhibitor 1 (OPG208) from Vaccinia virus (strain Copenhagen) (VACV).